The following is a 92-amino-acid chain: MLKNSFFSIILKEQEENKENRGSVEFQVVSFTNKIRKLTSHLELHKKDYLSQRGLRKILGKRQRLLAYLSKKNRARYKELIGQLDIRERKTR.

Belongs to the universal ribosomal protein uS15 family. Part of the 30S ribosomal subunit.

The protein localises to the plastid. Its subcellular location is the chloroplast. This chain is Small ribosomal subunit protein uS15c (rps15), found in Guizotia abyssinica (Niger).